Consider the following 130-residue polypeptide: uncharacterized protein (130 aa).

This is an uncharacterized protein from Escherichia coli (strain K12).